A 128-amino-acid chain; its full sequence is Small ribosomal subunit protein uS14m (128 aa).

Belongs to the universal ribosomal protein uS14 family. Component of the mitochondrial ribosome small subunit (28S) which comprises a 12S rRNA and about 30 distinct proteins. Interacts with LIAT1.

The protein localises to the mitochondrion. This chain is Small ribosomal subunit protein uS14m (MRPS14), found in Bos taurus (Bovine).